Consider the following 408-residue polypeptide: GTPase Obg (408 aa).

In terms of domain architecture, Obg spans 1-159; that stretch reads MKFFDEARIE…RNLHLELKVL (159 aa). Residues 160 to 334 enclose the OBG-type G domain; that stretch reads ADVGLLGMPN…LIFALQDFLD (175 aa). GTP-binding positions include 166 to 173, 191 to 195, 213 to 216, 284 to 287, and 315 to 317; these read GMPNAGKS, FTTLQ, DIPG, NKLD, and SAL. Positions 173 and 193 each coordinate Mg(2+). The tract at residues 385–408 is disordered; sequence AEDALAEDALDDDADGEDADPNAR.

This sequence belongs to the TRAFAC class OBG-HflX-like GTPase superfamily. OBG GTPase family. As to quaternary structure, monomer. Mg(2+) is required as a cofactor.

The protein localises to the cytoplasm. In terms of biological role, an essential GTPase which binds GTP, GDP and possibly (p)ppGpp with moderate affinity, with high nucleotide exchange rates and a fairly low GTP hydrolysis rate. Plays a role in control of the cell cycle, stress response, ribosome biogenesis and in those bacteria that undergo differentiation, in morphogenesis control. This Azoarcus sp. (strain BH72) protein is GTPase Obg.